We begin with the raw amino-acid sequence, 91 residues long: Transcriptional repressor FrmR (91 aa).

This sequence belongs to the FrmR/RcnR family. Homotetramer.

It is found in the cytoplasm. Functionally, formaldehyde sensor. In the absence of formaldehyde, mediates repression of the frmRAB operon. Acts by binding directly to the frmRAB promoter region. In the presence of formaldehyde, it dissociates from the frmRAB promoter region and allows expression of the formaldehyde detoxification system encoded by frmA and frmB. This Escherichia coli (strain UTI89 / UPEC) protein is Transcriptional repressor FrmR.